The primary structure comprises 105 residues: Protein FAM24A (105 aa).

Residues 1–32 form the signal peptide; it reads MAKMFDLRTKIMIGIGSSLLVAAMVLLSVVFC.

Belongs to the FAM24 family.

The protein localises to the secreted. The chain is Protein FAM24A (FAM24A) from Homo sapiens (Human).